Consider the following 504-residue polypeptide: D-alanine--D-alanyl carrier protein ligase (504 aa).

152-153 (TS) serves as a coordination point for ATP. D197 is a D-alanine binding site. 292-297 (NTYGPT) contacts ATP. Residue V301 coordinates D-alanine. ATP is bound by residues D383, 394–397 (YNGR), and K492. A D-alanine-binding site is contributed by K492.

This sequence belongs to the ATP-dependent AMP-binding enzyme family. DltA subfamily.

The protein resides in the cytoplasm. The catalysed reaction is holo-[D-alanyl-carrier protein] + D-alanine + ATP = D-alanyl-[D-alanyl-carrier protein] + AMP + diphosphate. It participates in cell wall biogenesis; lipoteichoic acid biosynthesis. In terms of biological role, catalyzes the first step in the D-alanylation of lipoteichoic acid (LTA), the activation of D-alanine and its transfer onto the D-alanyl carrier protein (Dcp) DltC. In an ATP-dependent two-step reaction, forms a high energy D-alanyl-AMP intermediate, followed by transfer of the D-alanyl residue as a thiol ester to the phosphopantheinyl prosthetic group of the Dcp. D-alanylation of LTA plays an important role in modulating the properties of the cell wall in Gram-positive bacteria, influencing the net charge of the cell wall. This is D-alanine--D-alanyl carrier protein ligase from Bacillus cytotoxicus (strain DSM 22905 / CIP 110041 / 391-98 / NVH 391-98).